Reading from the N-terminus, the 95-residue chain is Selenoprotein K (95 aa).

A helical membrane pass occupies residues 20–42; that stretch reads LSFITDFFWGIAEFVVLFFRTLL. Residues 47-95 are disordered; it reads KKRRGYGSSSDSRYDDGRGPPGNPPRRRMGRINHLQGPNPPPMAGGUGR. A non-standard amino acid (selenocysteine) is located at residue selenocysteine 93.

It belongs to the selenoprotein K family. As to quaternary structure, interacts with DERL1, DERL2, DERL3 and SELENOS. The SELENOK-SELENOS complex interacts with VCP. Interacts with ZDHHC6. In terms of processing, cleaved by CAPN2/m-calpain in resting macrophages but not in activated macrophages. Macrophage activation up-regulates expression of the calpain inhibitor CAST/calpastatin, resulting in inhibition of CAPN2 activity. Post-translationally, truncated SELENOK proteins produced by failed UGA/Sec decoding are ubiquitinated by the CRL2(KLHDC2) complex, which recognizes the diglycine (Gly-Gly) at the C-terminus of truncated SELENOK proteins.

It localises to the endoplasmic reticulum membrane. Its subcellular location is the cell membrane. Functionally, required for Ca(2+) flux in immune cells and plays a role in T-cell proliferation and in T-cell and neutrophil migration. Involved in endoplasmic reticulum-associated degradation (ERAD) of soluble glycosylated proteins. Required for palmitoylation and cell surface expression of CD36 and involved in macrophage uptake of low-density lipoprotein and in foam cell formation. Together with ZDHHC6, required for palmitoylation of ITPR1 in immune cells, leading to regulate ITPR1 stability and function. Plays a role in protection of cells from ER stress-induced apoptosis. Protects cells from oxidative stress when overexpressed in cardiomyocytes. The protein is Selenoprotein K of Bos taurus (Bovine).